We begin with the raw amino-acid sequence, 222 residues long: Uracil-DNA glycosylase (222 aa).

Catalysis depends on Asp61, which acts as the Proton acceptor.

The protein belongs to the uracil-DNA glycosylase (UDG) superfamily. UNG family.

It localises to the cytoplasm. It carries out the reaction Hydrolyzes single-stranded DNA or mismatched double-stranded DNA and polynucleotides, releasing free uracil.. Excises uracil residues from the DNA which can arise as a result of misincorporation of dUMP residues by DNA polymerase or due to deamination of cytosine. In Aeromonas salmonicida (strain A449), this protein is Uracil-DNA glycosylase.